A 158-amino-acid polypeptide reads, in one-letter code: MSTAICPCGSGNLLDACCGHYHAGHPAPCAEALMRSRYSAYVLGLIDYLVATTLPAQQAGLDRQSISNWSAQSTWLGLDVESSEVLGGQPEHAFVTFTARWHDGQGEHSHRERSSFVQNSGRWYFIDPTVQLKLGRNDACPCASGQKFKKCCAGYFGS.

It belongs to the UPF0225 family.

The protein is UPF0225 protein Pfl01_1218 of Pseudomonas fluorescens (strain Pf0-1).